The chain runs to 844 residues: Fe(2+) transport protein A/Fe(2+) transporter FeoB fusion protein (844 aa).

The tract at residues 1-73 (MRLSELHTGD…EDAAKIEVEL (73 aa)) is feoA. A feoB region spans residues 74-844 (ISSNATSSPA…LIYRIGILFF (771 aa)). A compositionally biased stretch (polar residues) spans 79–106 (TSSPASNDIGEQSANPDSNESIPTNPTE). Residues 79–110 (TSSPASNDIGEQSANPDSNESIPTNPTEDISA) form a disordered region. In terms of domain architecture, FeoB-type G spans 126-289 (VIRVALIGNP…FDTLISIHEG (164 aa)). Residues 133-140 (GNPNCGKT), 158-162 (GVTVE), 179-182 (DLPG), 240-243 (NMFD), and 269-271 (VGR) contribute to the GTP site. 8 helical membrane-spanning segments follow: residues 418-438 (VLGFPLFLLFMFIMFEATFVL), 475-495 (IGGVGGVIVFLPNILILYFFI), 520-540 (LHGKSFIPLIMGFGCNVPAIM), 559-579 (PLMSCSARLPVYLLLAGAFFP), 581-601 (SAGLVLFGLYFLGILLAVLLA), 646-666 (MGSIILLASIVIWFLSYYPRY), 786-806 (IIALALMAFVLIYFPCIATVV), and 817-837 (WAVFSIIYSCSLAWIVSFLIY).

It in the N-terminal section; belongs to the FeoA family. The protein in the C-terminal section; belongs to the TRAFAC class TrmE-Era-EngA-EngB-Septin-like GTPase superfamily. FeoB GTPase (TC 9.A.8) family.

The protein localises to the cell inner membrane. Functionally, probable transporter of a GTP-driven Fe(2+) uptake system. The sequence is that of Fe(2+) transport protein A/Fe(2+) transporter FeoB fusion protein from Porphyromonas gingivalis (strain ATCC BAA-308 / W83).